A 484-amino-acid chain; its full sequence is Probable cytochrome P450 555A1 (484 aa).

A helical transmembrane segment spans residues 1–21 (MIIIVIVVFLFYFSFLNLNLN). Cys-432 is a binding site for heme.

The protein belongs to the cytochrome P450 family. Requires heme as cofactor.

Its subcellular location is the membrane. The protein is Probable cytochrome P450 555A1 (cyp555A1) of Dictyostelium discoideum (Social amoeba).